A 124-amino-acid polypeptide reads, in one-letter code: Small ribosomal subunit protein bS6 (124 aa).

The tract at residues 96–124 (ETAPSPMMKEVQREEARKAAQTTTEGQPA) is disordered. The span at 115-124 (AQTTTEGQPA) shows a compositional bias: polar residues.

This sequence belongs to the bacterial ribosomal protein bS6 family.

Functionally, binds together with bS18 to 16S ribosomal RNA. This chain is Small ribosomal subunit protein bS6, found in Cupriavidus metallidurans (strain ATCC 43123 / DSM 2839 / NBRC 102507 / CH34) (Ralstonia metallidurans).